The following is a 221-amino-acid chain: Ribosomal RNA large subunit methyltransferase E (221 aa).

The S-adenosyl-L-methionine site is built by G60, W62, D89, D105, and D134. K174 serves as the catalytic Proton acceptor. The segment at 199–221 (KPKASRDKSSETFLLGRQLKHPG) is disordered.

Belongs to the class I-like SAM-binding methyltransferase superfamily. RNA methyltransferase RlmE family.

It localises to the cytoplasm. It catalyses the reaction uridine(2552) in 23S rRNA + S-adenosyl-L-methionine = 2'-O-methyluridine(2552) in 23S rRNA + S-adenosyl-L-homocysteine + H(+). Functionally, specifically methylates the uridine in position 2552 of 23S rRNA at the 2'-O position of the ribose in the fully assembled 50S ribosomal subunit. The chain is Ribosomal RNA large subunit methyltransferase E from Ralstonia pickettii (strain 12J).